The chain runs to 57 residues: DNA-directed RNA polymerase subunit Rpo6 (57 aa).

Belongs to the archaeal Rpo6/eukaryotic RPB6 RNA polymerase subunit family. Part of the RNA polymerase complex.

It localises to the cytoplasm. The catalysed reaction is RNA(n) + a ribonucleoside 5'-triphosphate = RNA(n+1) + diphosphate. DNA-dependent RNA polymerase (RNAP) catalyzes the transcription of DNA into RNA using the four ribonucleoside triphosphates as substrates. In Pyrococcus abyssi (strain GE5 / Orsay), this protein is DNA-directed RNA polymerase subunit Rpo6.